Consider the following 483-residue polypeptide: MNYYLGIDCGGTFIKAALFDKTGKMFSCVRENVQVISEQAGYAERDMDELWQIFARVIRQTIERSQVSPQHIKGIGISAQGKGAFLLDQENKPLGRGILSSDQRALTLVKQWQEQGIPEQLYPHTRQTLWTGHPVSILRWLKEHEPERYQRIGSILMSHDYLRFCLTGELHCEETNISESNLYNIHSGQYDPKLAELLGLEGIIAKLPPVIAANQIAGYVTPKAAELTGLAVGTAVVGGLFDVVSTALCAGLDDETKLNAVLGTWSVVSGVTQHIDQQQTLPFVYGCYAEAGKFIVHEASPTSAGNLEWFVKQWHLDYAHINQHVASLEPASSSVLFVPFLYGSNAGLGMQACFYGMQAHHTQAHLLQAIYEGVLFSLMHHLERMRKRFPQANLLRVTGGPTKSPIWLQMLADFTGMRLEIPQIEETGCLGAALMAMQGVNESADVFQAQSMLHVEPNPAYFAAYQAKYQRYQQLTTALKAML.

Belongs to the FGGY kinase family. Homodimer.

The enzyme catalyses L-xylulose + ATP = L-xylulose 5-phosphate + ADP + H(+). This is Probable L-xylulose kinase (lyx) from Pasteurella multocida (strain Pm70).